The sequence spans 651 residues: Acetyl-coenzyme A synthetase (651 aa).

CoA contacts are provided by residues 189-192 (RGGK), threonine 311, and asparagine 335. ATP-binding positions include 387–389 (GEP), 411–416 (DTWWQT), aspartate 500, and arginine 515. A CoA-binding site is contributed by serine 523. Arginine 526 contributes to the ATP binding site. 3 residues coordinate Mg(2+): valine 537, histidine 539, and valine 542. Arginine 586 provides a ligand contact to CoA. Residue lysine 611 is modified to N6-acetyllysine.

This sequence belongs to the ATP-dependent AMP-binding enzyme family. Mg(2+) serves as cofactor. Post-translationally, acetylated. Deacetylation by the SIR2-homolog deacetylase activates the enzyme.

The catalysed reaction is acetate + ATP + CoA = acetyl-CoA + AMP + diphosphate. Its function is as follows. Catalyzes the conversion of acetate into acetyl-CoA (AcCoA), an essential intermediate at the junction of anabolic and catabolic pathways. AcsA undergoes a two-step reaction. In the first half reaction, AcsA combines acetate with ATP to form acetyl-adenylate (AcAMP) intermediate. In the second half reaction, it can then transfer the acetyl group from AcAMP to the sulfhydryl group of CoA, forming the product AcCoA. The protein is Acetyl-coenzyme A synthetase of Brucella suis (strain ATCC 23445 / NCTC 10510).